Reading from the N-terminus, the 391-residue chain is GTPase Obg (391 aa).

One can recognise an Obg domain in the interval 1–159 (MKFIDEALIR…RDLQLELMLL (159 aa)). Positions 160–333 (ADVGMLGLPN…LTRDIMDFIE (174 aa)) constitute an OBG-type G domain. GTP-binding positions include 166 to 173 (GLPNAGKS), 191 to 195 (FTTLV), 213 to 216 (DIPG), 283 to 286 (NKID), and 314 to 316 (SAA). Ser-173 and Thr-193 together coordinate Mg(2+). The tract at residues 361-391 (QNPITEDDWDDLDDDGWTEEDDEGVEFIYKP) is disordered. The segment covering 365-385 (TEDDWDDLDDDGWTEEDDEGV) has biased composition (acidic residues).

This sequence belongs to the TRAFAC class OBG-HflX-like GTPase superfamily. OBG GTPase family. Monomer. It depends on Mg(2+) as a cofactor.

The protein resides in the cytoplasm. Its function is as follows. An essential GTPase which binds GTP, GDP and possibly (p)ppGpp with moderate affinity, with high nucleotide exchange rates and a fairly low GTP hydrolysis rate. Plays a role in control of the cell cycle, stress response, ribosome biogenesis and in those bacteria that undergo differentiation, in morphogenesis control. In Glaesserella parasuis serovar 5 (strain SH0165) (Haemophilus parasuis), this protein is GTPase Obg.